The primary structure comprises 759 residues: Protein hunchback (759 aa).

Disordered regions lie at residues 30-51 and 171-215; these read EPGH…PIPS and SSEK…EDMK. The segment covering 39 to 51 has biased composition (polar residues); sequence SVASSPRQSPIPS. Residue T179 is modified to Phosphothreonine. 4 positions are modified to phosphoserine: S189, S208, S210, and S211. The span at 199-215 shows a compositional bias: basic and acidic residues; sequence EPEKEHDQMSNSSEDMK. 4 consecutive C2H2-type zinc fingers follow at residues 241-263, 270-292, 298-320, and 326-350; these read YKCK…TRTH, LQCP…IRKH, FQCD…RKSH, and YRCA…KYGH. Disordered regions lie at residues 366 to 419, 513 to 565, and 606 to 696; these read LVID…TSQL, QLQQ…PQQP, and MTSP…APAS. Composition is skewed to low complexity over residues 399 to 419 and 513 to 522; these read VAAV…TSQL and QLQQQNQQQS. Positions 523-532 are enriched in acidic residues; it reads DNEEEEQDDE. A phosphoserine mark is found at S537 and S540. A compositionally biased stretch (low complexity) spans 655–696; sequence ANTSASSTASSSGNSSNASSNGNSSSNSSSNGTSSAAAAPAS. 2 consecutive C2H2-type zinc fingers follow at residues 706 to 728 and 734 to 758; these read YECK…MGYH and FKCN…RNAH.

Belongs to the hunchback C2H2-type zinc-finger protein family.

The protein resides in the nucleus. In terms of biological role, gap class segmentation protein that controls development of head structures. This Drosophila yakuba (Fruit fly) protein is Protein hunchback.